Here is a 474-residue protein sequence, read N- to C-terminus: 6-phospho-beta-galactosidase (474 aa).

D-galactose 6-phosphate is bound by residues Q18, H115, N159, E160, and N296. The Proton donor role is filled by E160. Catalysis depends on E374, which acts as the Nucleophile. Residues S427, W428, K434, and Y436 each contribute to the D-galactose 6-phosphate site.

This sequence belongs to the glycosyl hydrolase 1 family.

It carries out the reaction a 6-phospho-beta-D-galactoside + H2O = D-galactose 6-phosphate + an alcohol. The protein operates within carbohydrate metabolism; lactose degradation; D-galactose 6-phosphate and beta-D-glucose from lactose 6-phosphate: step 1/1. The protein is 6-phospho-beta-galactosidase of Clostridium acetobutylicum (strain ATCC 824 / DSM 792 / JCM 1419 / IAM 19013 / LMG 5710 / NBRC 13948 / NRRL B-527 / VKM B-1787 / 2291 / W).